Here is a 445-residue protein sequence, read N- to C-terminus: Argininosuccinate synthase (445 aa).

ATP contacts are provided by residues 17–25 (AFSGGLDTS) and A43. Y99 provides a ligand contact to L-citrulline. Positions 129 and 131 each coordinate ATP. Residues T131, N135, and D136 each contribute to the L-aspartate site. L-citrulline is bound at residue N135. D136 serves as a coordination point for ATP. Positions 139 and 192 each coordinate L-citrulline. Residue D194 participates in ATP binding. 3 residues coordinate L-citrulline: T201, E203, and E280.

This sequence belongs to the argininosuccinate synthase family. Type 2 subfamily. As to quaternary structure, homotetramer.

The protein localises to the cytoplasm. The catalysed reaction is L-citrulline + L-aspartate + ATP = 2-(N(omega)-L-arginino)succinate + AMP + diphosphate + H(+). It functions in the pathway amino-acid biosynthesis; L-arginine biosynthesis; L-arginine from L-ornithine and carbamoyl phosphate: step 2/3. This chain is Argininosuccinate synthase, found in Acidobacterium capsulatum (strain ATCC 51196 / DSM 11244 / BCRC 80197 / JCM 7670 / NBRC 15755 / NCIMB 13165 / 161).